We begin with the raw amino-acid sequence, 255 residues long: Taurine import ATP-binding protein TauB (255 aa).

One can recognise an ABC transporter domain in the interval 2 to 229 (LQISHLYADY…RFVAGESSRS (228 aa)). 34 to 41 (GPSGCGKT) provides a ligand contact to ATP.

It belongs to the ABC transporter superfamily. Taurine importer (TC 3.A.1.17.1) family. The complex is composed of two ATP-binding proteins (TauB), two transmembrane proteins (TauC) and a solute-binding protein (TauA).

Its subcellular location is the cell inner membrane. It catalyses the reaction taurine(out) + ATP + H2O = taurine(in) + ADP + phosphate + H(+). Its function is as follows. Part of the ABC transporter complex TauABC involved in taurine import. Responsible for energy coupling to the transport system. This Shigella flexneri protein is Taurine import ATP-binding protein TauB.